The primary structure comprises 405 residues: Accessory Sec system protein translocase subunit SecY2 (405 aa).

10 consecutive transmembrane segments (helical) span residues 14–34, 65–85, 104–124, 131–151, 156–176, 190–210, 243–263, 285–305, 343–363, and 368–388; these read MCTL…LPFV, LFSI…MFSF, MYLT…NLPV, FLVF…LVWL, ATIG…ASLP, LGLL…VVLF, GMPY…LLLL, PLWI…FAFV, FALI…LFVL, and LLKV…LFTI.

It belongs to the SecY/SEC61-alpha family. SecY2 subfamily. As to quaternary structure, component of the accessory SecA2/SecY2 protein translocase complex required to export cell wall proteins. May form heterotrimers with SecE and SecG subunits.

The protein localises to the cell membrane. Its function is as follows. Part of the accessory SecA2/SecY2 system specifically required for export of possible cell wall proteins. The central subunit of a protein translocation channel. The chain is Accessory Sec system protein translocase subunit SecY2 from Streptococcus oralis (strain Uo5).